The following is a 431-amino-acid chain: Dihydroorotase (431 aa).

Positions 59 and 61 each coordinate Zn(2+). Substrate contacts are provided by residues 61–63 and Asn-93; that span reads HLR. Zn(2+)-binding residues include Asp-151, His-178, His-231, and Asp-304. Asp-304 is an active-site residue. Substrate is bound by residues His-308 and 322–323; that span reads FG.

This sequence belongs to the metallo-dependent hydrolases superfamily. DHOase family. Class I DHOase subfamily. Requires Zn(2+) as cofactor.

The catalysed reaction is (S)-dihydroorotate + H2O = N-carbamoyl-L-aspartate + H(+). Its pathway is pyrimidine metabolism; UMP biosynthesis via de novo pathway; (S)-dihydroorotate from bicarbonate: step 3/3. Its function is as follows. Catalyzes the reversible cyclization of carbamoyl aspartate to dihydroorotate. The polypeptide is Dihydroorotase (Thermoanaerobacter sp. (strain X514)).